Reading from the N-terminus, the 363-residue chain is Adenosine 3'-phospho 5'-phosphosulfate transporter 2 (363 aa).

Helical transmembrane passes span 39–59 (WLQFVLLSGAIFILYLGYGYM), 63–83 (IFKLPGMKPFGWTLTLIQFVI), 106–126 (IYGVIAFFTVATMGLSNASVG), 131–151 (PTQVIFKCCKLIPVLIGGILI), 157–177 (GWIDISAAILMSLGIIMFTLA), 187–206 (SRGYIMISGALLADAVIGNI), 231–251 (VFIFTYVVLSGEIFSAIPFFL), 257–277 (TFGYALIFSFLGYLGVNVVLT), 281–301 (VFGALVAVTVTTLRKALTIIL), and 310–330 (FTIEYVYAGSVVMLAIYLNLY).

This sequence belongs to the nucleotide-sugar transporter family. SLC35B subfamily.

The protein resides in the golgi apparatus membrane. In terms of biological role, mediates the transport of adenosine 3'-phospho 5'-phosphosulfate (PAPS), from cytosol into Golgi. PAPS is a universal sulfuryl donor for sulfation events that take place in the Golgi. In Caenorhabditis briggsae, this protein is Adenosine 3'-phospho 5'-phosphosulfate transporter 2 (pst-2).